Here is a 71-residue protein sequence, read N- to C-terminus: Brevinin-1E (71 aa).

An N-terminal signal peptide occupies residues 1–22 (MFTLKKSMLLLFFLGTINLSLC). Positions 23-45 (EEERDADEEERRDNPDESEVEVE) are excised as a propeptide. A disulfide bridge connects residues Cys-65 and Cys-71.

The protein belongs to the frog skin active peptide (FSAP) family. Brevinin subfamily. In terms of tissue distribution, expressed by the skin glands.

It localises to the secreted. Its function is as follows. Shows antibacterial activity against representative Gram-negative and Gram-positive bacterial species, and a very high hemolytic activity. The polypeptide is Brevinin-1E (Pelophylax lessonae (Pool frog)).